An 842-amino-acid polypeptide reads, in one-letter code: Probable receptor-like protein kinase At5g61350 (842 aa).

The first 27 residues, 1 to 27 (MGGDFRHFSSHVSLLLLFLLIVKSSSS), serve as a signal peptide directing secretion. The Extracellular portion of the chain corresponds to 28–425 (FTPADNYLID…IGGMSSKKLA (398 aa)). N-linked (GlcNAc...) asparagine glycosylation is found at Asn81, Asn125, Asn252, Asn294, Asn359, and Asn365. The helical transmembrane segment at 426–446 (IAGIGFVMALTAFLGVVVLLV) threads the bilayer. The Cytoplasmic segment spans residues 447-842 (RWQRRPKDWQ…EMQSPSHSIP (396 aa)). The Protein kinase domain occupies 525 to 803 (FDENAVCGVG…GDVLWNLEYA (279 aa)). ATP-binding positions include 531 to 539 (CGVGGFGKV) and Lys553. Asp655 acts as the Proton acceptor in catalysis.

The protein belongs to the protein kinase superfamily. Ser/Thr protein kinase family.

Its subcellular location is the membrane. This Arabidopsis thaliana (Mouse-ear cress) protein is Probable receptor-like protein kinase At5g61350.